We begin with the raw amino-acid sequence, 318 residues long: MKPPGPMMNELLAIGHPEVMAERRRWLASLAEERRLSEKTVDAYERDTRQFLTFLTGHLAGPPRLSDICALRPADLRGFLAQRRKGGAGARTLGRGLAGLRSFLRYLERNGLANAAGAGAVRSPKQPKSLPKALTDREALKVVTADAQLAEEPWIAARNAAVLTLLYGCGLRIAEALDLTPADFSGPVTSLRVTGKGGKTRIVPMIAAAAEAVETYRKLCPYHIEPEEPIFRGARGAKLQPAIIQREMQKLRAALGLPDSATPHALRHSFATHLLAGGGDLRTIQELLGHASLSTTQVYTGVDSARLLEIYDRAHPRA.

The 92-residue stretch at 17–108 (PEVMAERRRW…GLRSFLRYLE (92 aa)) folds into the Core-binding (CB) domain. Residues 129-312 (SLPKALTDRE…DSARLLEIYD (184 aa)) enclose the Tyr recombinase domain. Residues R172, K196, H264, R267, and H290 contribute to the active site. Catalysis depends on Y299, which acts as the O-(3'-phospho-DNA)-tyrosine intermediate.

The protein belongs to the 'phage' integrase family. XerC subfamily. In terms of assembly, forms a cyclic heterotetrameric complex composed of two molecules of XerC and two molecules of XerD.

The protein localises to the cytoplasm. Its function is as follows. Site-specific tyrosine recombinase, which acts by catalyzing the cutting and rejoining of the recombining DNA molecules. The XerC-XerD complex is essential to convert dimers of the bacterial chromosome into monomers to permit their segregation at cell division. It also contributes to the segregational stability of plasmids. In Rhizobium meliloti (strain 1021) (Ensifer meliloti), this protein is Tyrosine recombinase XerC.